The primary structure comprises 1495 residues: Ras GTPase-activating-like protein IQG1 (1495 aa).

In terms of domain architecture, Calponin-homology (CH) spans 108 to 221 (LCRVSEVKIW…ILISMINKKW (114 aa)). Phosphothreonine is present on Thr-264. Residue Ser-268 is modified to Phosphoserine. Thr-299 is subject to Phosphothreonine. IQ domains are found at residues 447–467 (EQDI…VLSS), 538–567 (SHYP…KLND), 568–597 (ERES…AVHD), 599–628 (HKEN…SLGK), 629–658 (ENCN…PENN), 687–716 (EYNN…FYKR), and 717–746 (NVRS…CPNP). The stretch at 759 to 798 (NGTATIEEVQNQLESCQASLDSENMKKERLLKSIRQQLNI) forms a coiled coil. Positions 876–1100 (SYFTRFVCEM…PHIKDVLYNV (225 aa)) constitute a Ras-GAP domain.

Interacts with AFR1. Interacts with AKR1. Interacts with activated CDC42. Interacts with calmodulin CMD1. Interacts with myosin MYO1 and its light chain MLC1. Interacts with BUD4. Interacts with INN1. Interacts with SEC3. Interacts with TEM1.

The protein resides in the bud neck. In terms of biological role, required for the assembly and the contraction of the actomyosin ring at the bud neck during cytokinesis. Seems to be involved in additional tasks during cell division like axial bud-site selection and targeted secretion by recruiting the spatial landmark BUD4, the septin CDC12 and the secretion landmark SEC3 to the bud neck. May be regulated by calcium ions. The polypeptide is Ras GTPase-activating-like protein IQG1 (IQG1) (Saccharomyces cerevisiae (strain ATCC 204508 / S288c) (Baker's yeast)).